The sequence spans 366 residues: BIIDXI-like protein At5g11420 (366 aa).

An N-terminal signal peptide occupies residues 1-22 (MKGGSLSFLFVLLIATITSVIC). Asn-98, Asn-122, and Asn-209 each carry an N-linked (GlcNAc...) asparagine glycan.

As to quaternary structure, interacts with PME3.

It localises to the secreted. The protein resides in the cell wall. Together with BIIDXI, acts as a positive regulator of PME3 activity during several developmental processes, including seed germination and endosperm (testa) rupture at the micropyle, probably by modulating the pectin status in cell walls. This Arabidopsis thaliana (Mouse-ear cress) protein is BIIDXI-like protein At5g11420.